A 527-amino-acid polypeptide reads, in one-letter code: Type-2 serine--tRNA ligase (527 aa).

A317 provides a ligand contact to L-serine. C319 lines the Zn(2+) pocket. R349 is a binding site for L-serine. Residues 349–351 (RWE) and 360–361 (RV) contribute to the ATP site. 366–368 (RIE) contributes to the L-serine binding site. Zn(2+) contacts are provided by E368 and C478. R485 is an ATP binding site.

Belongs to the class-II aminoacyl-tRNA synthetase family. Type-2 seryl-tRNA synthetase subfamily. In terms of assembly, homodimer. Zn(2+) is required as a cofactor.

Its subcellular location is the cytoplasm. The catalysed reaction is tRNA(Ser) + L-serine + ATP = L-seryl-tRNA(Ser) + AMP + diphosphate + H(+). It catalyses the reaction tRNA(Sec) + L-serine + ATP = L-seryl-tRNA(Sec) + AMP + diphosphate + H(+). It functions in the pathway aminoacyl-tRNA biosynthesis; selenocysteinyl-tRNA(Sec) biosynthesis; L-seryl-tRNA(Sec) from L-serine and tRNA(Sec): step 1/1. In terms of biological role, catalyzes the attachment of serine to tRNA(Ser). Is also able to aminoacylate tRNA(Sec) with serine, to form the misacylated tRNA L-seryl-tRNA(Sec), which will be further converted into selenocysteinyl-tRNA(Sec). The sequence is that of Type-2 serine--tRNA ligase from Methanopyrus kandleri (strain AV19 / DSM 6324 / JCM 9639 / NBRC 100938).